The chain runs to 357 residues: UDP-N-acetylglucosamine--N-acetylmuramyl-(pentapeptide) pyrophosphoryl-undecaprenol N-acetylglucosamine transferase (357 aa).

Residues 14–16, Asn-126, Arg-162, Ser-190, Ile-246, 265–270, and Gln-290 each bind UDP-N-acetyl-alpha-D-glucosamine; these read TGG and ALTVCE.

It belongs to the glycosyltransferase 28 family. MurG subfamily.

The protein localises to the cell inner membrane. It carries out the reaction di-trans,octa-cis-undecaprenyl diphospho-N-acetyl-alpha-D-muramoyl-L-alanyl-D-glutamyl-meso-2,6-diaminopimeloyl-D-alanyl-D-alanine + UDP-N-acetyl-alpha-D-glucosamine = di-trans,octa-cis-undecaprenyl diphospho-[N-acetyl-alpha-D-glucosaminyl-(1-&gt;4)]-N-acetyl-alpha-D-muramoyl-L-alanyl-D-glutamyl-meso-2,6-diaminopimeloyl-D-alanyl-D-alanine + UDP + H(+). It functions in the pathway cell wall biogenesis; peptidoglycan biosynthesis. Its function is as follows. Cell wall formation. Catalyzes the transfer of a GlcNAc subunit on undecaprenyl-pyrophosphoryl-MurNAc-pentapeptide (lipid intermediate I) to form undecaprenyl-pyrophosphoryl-MurNAc-(pentapeptide)GlcNAc (lipid intermediate II). This is UDP-N-acetylglucosamine--N-acetylmuramyl-(pentapeptide) pyrophosphoryl-undecaprenol N-acetylglucosamine transferase from Histophilus somni (strain 129Pt) (Haemophilus somnus).